The sequence spans 84 residues: DNA-directed RNA polymerase subunit Rpo5 (84 aa).

The protein belongs to the archaeal Rpo5/eukaryotic RPB5 RNA polymerase subunit family. In terms of assembly, part of the RNA polymerase complex.

It localises to the cytoplasm. It catalyses the reaction RNA(n) + a ribonucleoside 5'-triphosphate = RNA(n+1) + diphosphate. Functionally, DNA-dependent RNA polymerase (RNAP) catalyzes the transcription of DNA into RNA using the four ribonucleoside triphosphates as substrates. This Sulfurisphaera tokodaii (strain DSM 16993 / JCM 10545 / NBRC 100140 / 7) (Sulfolobus tokodaii) protein is DNA-directed RNA polymerase subunit Rpo5.